A 34-amino-acid polypeptide reads, in one-letter code: Photosystem II reaction center protein M (34 aa).

A helical membrane pass occupies residues 5–25 (ILAFIATALFILVPTAFLLII).

Belongs to the PsbM family. As to quaternary structure, PSII is composed of 1 copy each of membrane proteins PsbA, PsbB, PsbC, PsbD, PsbE, PsbF, PsbH, PsbI, PsbJ, PsbK, PsbL, PsbM, PsbT, PsbX, PsbY, PsbZ, Psb30/Ycf12, at least 3 peripheral proteins of the oxygen-evolving complex and a large number of cofactors. It forms dimeric complexes.

Its subcellular location is the plastid. The protein resides in the chloroplast thylakoid membrane. Its function is as follows. One of the components of the core complex of photosystem II (PSII). PSII is a light-driven water:plastoquinone oxidoreductase that uses light energy to abstract electrons from H(2)O, generating O(2) and a proton gradient subsequently used for ATP formation. It consists of a core antenna complex that captures photons, and an electron transfer chain that converts photonic excitation into a charge separation. This subunit is found at the monomer-monomer interface. The sequence is that of Photosystem II reaction center protein M from Cucumis sativus (Cucumber).